We begin with the raw amino-acid sequence, 66 residues long: DNA-directed RNA polymerase subunit omega (66 aa).

The protein belongs to the RNA polymerase subunit omega family. As to quaternary structure, the RNAP catalytic core consists of 2 alpha, 1 beta, 1 beta' and 1 omega subunit. When a sigma factor is associated with the core the holoenzyme is formed, which can initiate transcription.

The catalysed reaction is RNA(n) + a ribonucleoside 5'-triphosphate = RNA(n+1) + diphosphate. In terms of biological role, promotes RNA polymerase assembly. Latches the N- and C-terminal regions of the beta' subunit thereby facilitating its interaction with the beta and alpha subunits. This Clostridium botulinum (strain Eklund 17B / Type B) protein is DNA-directed RNA polymerase subunit omega.